Consider the following 304-residue polypeptide: Putative S-adenosyl-L-methionine-dependent methyltransferase MAP_3385 (304 aa).

S-adenosyl-L-methionine contacts are provided by residues aspartate 129 and 158-159 (DL).

Belongs to the UPF0677 family.

Functionally, exhibits S-adenosyl-L-methionine-dependent methyltransferase activity. This chain is Putative S-adenosyl-L-methionine-dependent methyltransferase MAP_3385, found in Mycolicibacterium paratuberculosis (strain ATCC BAA-968 / K-10) (Mycobacterium paratuberculosis).